The following is a 112-amino-acid chain: uncharacterized protein (112 aa).

The protein to M.jannaschii MJ1244 and M.thermoautotrophicum MTH1110.

This is an uncharacterized protein from Methanocaldococcus jannaschii (strain ATCC 43067 / DSM 2661 / JAL-1 / JCM 10045 / NBRC 100440) (Methanococcus jannaschii).